We begin with the raw amino-acid sequence, 229 residues long: ATP-dependent dethiobiotin synthetase BioD (229 aa).

E15–L20 lines the ATP pocket. T19 contributes to the Mg(2+) binding site. Residue K40 is part of the active site. ATP contacts are provided by residues D57, E118–G121, and P207–L209. Mg(2+)-binding residues include D57 and E118.

Belongs to the dethiobiotin synthetase family. Homodimer. It depends on Mg(2+) as a cofactor.

Its subcellular location is the cytoplasm. It carries out the reaction (7R,8S)-7,8-diammoniononanoate + CO2 + ATP = (4R,5S)-dethiobiotin + ADP + phosphate + 3 H(+). The protein operates within cofactor biosynthesis; biotin biosynthesis; biotin from 7,8-diaminononanoate: step 1/2. In terms of biological role, catalyzes a mechanistically unusual reaction, the ATP-dependent insertion of CO2 between the N7 and N8 nitrogen atoms of 7,8-diaminopelargonic acid (DAPA, also called 7,8-diammoniononanoate) to form a ureido ring. This chain is ATP-dependent dethiobiotin synthetase BioD, found in Ralstonia nicotianae (strain ATCC BAA-1114 / GMI1000) (Ralstonia solanacearum).